The primary structure comprises 481 residues: Probable glycine dehydrogenase (decarboxylating) subunit 2 (481 aa).

Lys269 is modified (N6-(pyridoxal phosphate)lysine).

The protein belongs to the GcvP family. C-terminal subunit subfamily. The glycine cleavage system is composed of four proteins: P, T, L and H. In this organism, the P 'protein' is a heterodimer of two subunits. The cofactor is pyridoxal 5'-phosphate.

It carries out the reaction N(6)-[(R)-lipoyl]-L-lysyl-[glycine-cleavage complex H protein] + glycine + H(+) = N(6)-[(R)-S(8)-aminomethyldihydrolipoyl]-L-lysyl-[glycine-cleavage complex H protein] + CO2. Functionally, the glycine cleavage system catalyzes the degradation of glycine. The P protein binds the alpha-amino group of glycine through its pyridoxal phosphate cofactor; CO(2) is released and the remaining methylamine moiety is then transferred to the lipoamide cofactor of the H protein. The polypeptide is Probable glycine dehydrogenase (decarboxylating) subunit 2 (Chlorobium chlorochromatii (strain CaD3)).